Consider the following 314-residue polypeptide: tRNA dimethylallyltransferase (314 aa).

Residue 11–18 (GPTASGKT) participates in ATP binding. 13–18 (TASGKT) serves as a coordination point for substrate. 4 interaction with substrate tRNA regions span residues 36-39 (DSAL), 160-164 (QRINR), 241-246 (RCVGYR), and 274-281 (KRQITWLR).

Belongs to the IPP transferase family. Monomer. It depends on Mg(2+) as a cofactor.

It carries out the reaction adenosine(37) in tRNA + dimethylallyl diphosphate = N(6)-dimethylallyladenosine(37) in tRNA + diphosphate. Catalyzes the transfer of a dimethylallyl group onto the adenine at position 37 in tRNAs that read codons beginning with uridine, leading to the formation of N6-(dimethylallyl)adenosine (i(6)A). The chain is tRNA dimethylallyltransferase from Glaesserella parasuis serovar 5 (strain SH0165) (Haemophilus parasuis).